The chain runs to 654 residues: Amyloid beta precursor like protein 1 (654 aa).

Residues methionine 1–glycine 38 form the signal peptide. Residues asparagine 39–glutamate 584 lie on the Extracellular side of the membrane. The segment at alanine 50–valine 146 is GFLD subdomain. In terms of domain architecture, E1 spans alanine 50–proline 212. Disulfide bonds link cysteine 60–cysteine 84, cysteine 95–cysteine 140, cysteine 120–cysteine 128, cysteine 156–cysteine 210, cysteine 167–cysteine 197, and cysteine 181–cysteine 209. Residues glutamate 154–proline 212 are cuBD subdomain. Residue histidine 174 participates in Cu(2+) binding. Zn(2+) is bound by residues glutamate 206, cysteine 209, and cysteine 210. Positions alanine 214–glycine 297 are disordered. Residues glutamine 262 to glutamate 272 show a composition bias toward acidic residues. The E2 domain occupies glycine 297 to leucine 488. 2 heparin-binding regions span residues phenylalanine 314 to leucine 346 and leucine 414 to lysine 445. Residues alanine 446–arginine 463 are collagen-binding. Residue asparagine 465 is glycosylated (N-linked (GlcNAc...) asparagine). The disordered stretch occupies residues serine 497–glycine 580. The span at serine 508–proline 523 shows a compositional bias: basic and acidic residues. Positions lysine 529–serine 539 are enriched in polar residues. Asparagine 555 carries an N-linked (GlcNAc...) asparagine glycan. Histidine 565 is a Cu(2+) binding site. Zn(2+) is bound at residue histidine 565. The chain crosses the membrane as a helical span at residues alanine 585–leucine 607. A Basolateral sorting signal motif is present at residues arginine 608–glycine 619. At arginine 608–proline 654 the chain is on the cytoplasmic side. An interaction with DAB1 region spans residues glutamate 636–glutamate 652. Positions histidine 640–proline 654 are interaction with DAB2. An NPXY motif; contains endocytosis signal motif is present at residues asparagine 644 to tyrosine 647.

The protein belongs to the APP family. In terms of assembly, monomer and homodimer. Heparin binding promotes homodimerization. Binds, via its C-terminus, to the PID domain of several cytoplasmic proteins, including APBB and APBA family members, MAPK8IP1 and DAB1. Binding to Dab1 inhibits its serine phosphorylation. Interacts with CPEB1. Interacts (via NPXY motif) with DAB2 (via PID domain); the interaction is impaired by tyrosine phosphorylation of the NPXY motif. Interacts (via NPXY motif) with DAB1. In terms of processing, proteolytically cleaved by caspases during neuronal apoptosis. Cleaved, in vitro, at Asp-624 by caspase-3. N- and O-glycosylated.

Its subcellular location is the cell membrane. It is found in the cytoplasm. In terms of biological role, may play a role in postsynaptic function. The C-terminal gamma-secretase processed fragment, ALID1, activates transcription activation through APBB1 (Fe65) binding. Couples to JIP signal transduction through C-terminal binding. May interact with cellular G-protein signaling pathways. Can regulate neurite outgrowth through binding to components of the extracellular matrix such as heparin and collagen I. Its function is as follows. The gamma-CTF peptide, C30, is a potent enhancer of neuronal apoptosis. This is Amyloid beta precursor like protein 1 (Aplp1) from Mus musculus (Mouse).